A 199-amino-acid chain; its full sequence is NAD(P)H-quinone oxidoreductase subunit 6, chloroplastic (199 aa).

Helical transmembrane passes span 13–33 (AILLLIESGVILGSLGVVLFT), 35–55 (IVYSAFLLGWVPVCISFLYIL), 64–84 (VQILIYVGTINVLIVFAVMLI), 96–118 (WTVGDGTALALCTSPFLSIIAAI), and 157–177 (LPFELLSIILLVAPVGAITMA).

The protein belongs to the complex I subunit 6 family. As to quaternary structure, NDH is composed of at least 16 different subunits, 5 of which are encoded in the nucleus.

Its subcellular location is the plastid. It is found in the chloroplast thylakoid membrane. It catalyses the reaction a plastoquinone + NADH + (n+1) H(+)(in) = a plastoquinol + NAD(+) + n H(+)(out). It carries out the reaction a plastoquinone + NADPH + (n+1) H(+)(in) = a plastoquinol + NADP(+) + n H(+)(out). Its function is as follows. NDH shuttles electrons from NAD(P)H:plastoquinone, via FMN and iron-sulfur (Fe-S) centers, to quinones in the photosynthetic chain and possibly in a chloroplast respiratory chain. The immediate electron acceptor for the enzyme in this species is believed to be plastoquinone. Couples the redox reaction to proton translocation, and thus conserves the redox energy in a proton gradient. This chain is NAD(P)H-quinone oxidoreductase subunit 6, chloroplastic (ndhG), found in Huperzia lucidula (Shining clubmoss).